A 233-amino-acid polypeptide reads, in one-letter code: Protein Thf1 (233 aa).

Residues 183-205 (DKLSKDLELYRSNLDKMTQALAV) are a coiled coil. Positions 213–233 (DRKKREQRQQQASTPVAPPNE) are disordered.

Belongs to the THF1 family.

May be involved in photosynthetic membrane biogenesis. The polypeptide is Protein Thf1 (Trichormus variabilis (strain ATCC 29413 / PCC 7937) (Anabaena variabilis)).